The following is a 139-amino-acid chain: Drosulfakinins (139 aa).

An N-terminal signal peptide occupies residues 1–35; sequence MGHRGMGCAHFATMAMPLWALTFYLLVVLPVPSQT. Positions 36 to 71 are excised as a propeptide; it reads ASVEVGKEERRLQDLDPKMGSEAGNTDGLSLARFGS. Phenylalanine 80 carries the phenylalanine amide modification. Positions 81-109 are excised as a propeptide; it reads GHRVPIISRPVIPIELDLLMDNEDDRTMS. Tyrosine 115 carries the sulfotyrosine modification. Phenylalanine amide is present on phenylalanine 120. Tyrosine 132 is subject to Sulfotyrosine. Phenylalanine 137 bears the Phenylalanine amide mark.

It belongs to the gastrin/cholecystokinin family.

It is found in the secreted. Drosulfakinin-0 (DSK 0) plays diverse biological roles including regulating gut muscle contraction in adults but not in larvae. The polypeptide is Drosulfakinins (Drosophila pseudoobscura pseudoobscura (Fruit fly)).